The following is an 86-amino-acid chain: uncharacterized protein (86 aa).

4Fe-4S ferredoxin-type domains lie at 1-29 and 31-65; these read MALL…IGDE and YVID…PDPE. [4Fe-4S] cluster contacts are provided by C9, C12, C15, C19, C38, C41, C50, and C54.

It depends on [4Fe-4S] cluster as a cofactor.

This is an uncharacterized protein from Haemophilus influenzae (strain ATCC 51907 / DSM 11121 / KW20 / Rd).